Here is a 317-residue protein sequence, read N- to C-terminus: Serpentine receptor class delta-26 (317 aa).

7 helical membrane-spanning segments follow: residues 5-25 (LLHTVLSVTGVTLNAFMMYLA), 38-58 (AIITIKTFTDILTSAMSFFVM), 83-103 (ACYVGHMFMLCFLECNLIWMI), 122-142 (SLVFVALCLSIPSFIHMAAWI), 176-196 (ITLILQLFITSVLVLIAYAWI), 227-247 (FQVFLPTFIFLGFFIFAAMFG), and 258-278 (LVSIAFMFSPICSPFSYILFV).

The protein belongs to the nematode receptor-like protein srd family.

The protein resides in the membrane. This Caenorhabditis elegans protein is Serpentine receptor class delta-26 (srd-26).